A 375-amino-acid polypeptide reads, in one-letter code: MAQHDFAPAWLNFPTPPSSTKPFLYSDKHSEGLGRSDCAFNVNRQRHSSSDAFDSAIGRPHGGNLAKREKIAWRPQSRAGAEPTWQRDTSPHPYSMKSQLHSENNTSEIDLPRKVDREERKMFEVEDFSSLYPEHERGKNSFAAGLWEYPVSDRSRSSQMLGIKKGVKDDFSLSGYSIAAGNQSLPGKHWAGIKKEECKSLTKESSIGSSFYQDCPHEKYRPNTSLHAELLAVTPCSLEGEEDTNLNNRNGSCPERDINLNFDENKISEDNGNTLMSGQISSAYPPDGVLSSSLEAEFRLLREMGWQEDSENDETCAPLTEDEMKEFQAISEQLQKNGLRKHVFLRNALALDLFHDSVQKEDSETSSSSDTSDDE.

Disordered regions lie at residues 49–109 (SSDA…TSEI) and 356–375 (DSVQ…SDDE). Residues 96–108 (MKSQLHSENNTSE) show a composition bias toward polar residues. Residues 365–375 (TSSSSDTSDDE) are compositionally biased toward low complexity.

The protein belongs to the vasculin family.

Its subcellular location is the nucleus. In terms of biological role, functions as a GC-rich promoter-specific transactivating transcription factor. This Xenopus tropicalis (Western clawed frog) protein is Vasculin (gpbp1).